The primary structure comprises 505 residues: Probable RNA exonuclease NGL3 (505 aa).

Disordered regions lie at residues 1 to 75 (MDSQ…FPTP) and 334 to 369 (RNGE…SFTA). A compositionally biased stretch (polar residues) spans 10 to 23 (SPSQKESSSTSGLV). Residues 36-54 (HRDQLSVDQIKKIREERAQ) are compositionally biased toward basic and acidic residues. The residue at position 62 (serine 62) is a Phosphoserine. The span at 338 to 347 (ESDQDDEECD) shows a compositional bias: acidic residues.

Belongs to the CCR4/nocturin family.

This chain is Probable RNA exonuclease NGL3 (NGL3), found in Saccharomyces cerevisiae (strain ATCC 204508 / S288c) (Baker's yeast).